The sequence spans 474 residues: 4-aminobutyrate aminotransferase (474 aa).

Over residues 1–13 the composition is skewed to polar residues; that stretch reads MSSTATVTESTHF. The disordered stretch occupies residues 1–31; that stretch reads MSSTATVTESTHFFPNEPQGPSIKTETIPGP. Residue 142 to 143 participates in pyridoxal 5'-phosphate binding; that stretch reads GS. R199 contributes to the substrate binding site. An N6-(pyridoxal phosphate)lysine modification is found at K333. Residue T357 coordinates pyridoxal 5'-phosphate.

Belongs to the class-III pyridoxal-phosphate-dependent aminotransferase family. In terms of assembly, homodimer. The cofactor is pyridoxal 5'-phosphate.

Its subcellular location is the cytoplasm. The enzyme catalyses 4-aminobutanoate + 2-oxoglutarate = succinate semialdehyde + L-glutamate. In terms of biological role, required for the degradation of gamma-aminobutyric acid (GABA), which is important for utilization of GABA as nitrogen source. Deaminates GABA to succinate-semialdehyde, which in turn is converted to succinate by the succinate semialdehyde dehydrogenase. Cannot transaminate beta-alanine (BAL). This chain is 4-aminobutyrate aminotransferase (uga1), found in Schizosaccharomyces pombe (strain 972 / ATCC 24843) (Fission yeast).